A 930-amino-acid polypeptide reads, in one-letter code: MRVKDTLNLGKTKFPMRGRLPETEAQREALWEENKVYEQRQKLNEGKPSFVLHDGPPYANGPIHIGHAMNKISKDFIVRYKSMTGYRAPYVPGWDTHGLPIEHQLTKAGYDRKKMSLTEFRDLCQKYALEQVEIQKKGFKRLGVAGEWDHPYLTLAKEFEAAQIKVFGAFAKRGLLYQAKKPVYWSWSSESALAEAEVEYHDVVAKTAFFTEQVQDGKGLLDSDTYLVGWTTTPWTIPASEAVAVSADFEYALVQPSGSDRKYVVAASLLGDLAQKFNWTDYQVVKTFKGAEMEGMTTKHPYIDRELLVGLADYVTDDAGTGLVHTAPGYGDDDYNFGKKYNLPIFAPMNDQGVLTAENGPEFDGVFYQDADDISLRLLEEHDALLLEEDLEHSYPFDWRTKKPIVFRATDQWFVSIDKMRDEILKAVDEVTYYPTWGKVRLRNMLKDRGDWVISRQRVWGVPLPIFYAEDGTPIMTEETINHVSDLFREYGSNVWFDREAKDLLPAGFTSEHSPNGKFTKETDIMDVWFDSGSSHQGVLAERDYLTYPADMYLEGSDQYRGWFNSSLITSVVVSGHAPYKSVLSQGFTLDQSGKKMSKSLGNVIDPNKVVKQMGAEIIRLWVMSADTSADVRVSMETLQQISESYRKLRNTFRFLLANTSDFGPENFVAYEKREAVDQYMTVNFNHFLAGMRDEFDRYDFLNAYKHLINFVNNDLSSFYMNVAKDVLYIEPEDSHVRRSMQATFYEILSGLTKLLTPILPHTTEEVWSYMDEPEDFVQLTEIPEARTFENGNALLEKWEGFMELRSHVLKCLEEARNAKLIGRSLEASADLYLTASQQELLADLGTDAGLLCGVSALSVHDASEAPAEAESFSDNAAVLVQAAKGEVCDRCRMTKEDVGSDPAYQQLCARCAKLVRENFPQTVEEGLEK.

The tract at residues 1–21 (MRVKDTLNLGKTKFPMRGRLP) is disordered. The 'HIGH' region signature appears at 57-67 (PYANGPIHIGH). Glu-555 lines the L-isoleucyl-5'-AMP pocket. The 'KMSKS' region signature appears at 596–600 (KMSKS). Lys-599 contacts ATP. Residues Cys-889, Cys-892, Cys-909, and Cys-912 each coordinate Zn(2+).

The protein belongs to the class-I aminoacyl-tRNA synthetase family. IleS type 1 subfamily. As to quaternary structure, monomer. Zn(2+) serves as cofactor.

It is found in the cytoplasm. The catalysed reaction is tRNA(Ile) + L-isoleucine + ATP = L-isoleucyl-tRNA(Ile) + AMP + diphosphate. Catalyzes the attachment of isoleucine to tRNA(Ile). As IleRS can inadvertently accommodate and process structurally similar amino acids such as valine, to avoid such errors it has two additional distinct tRNA(Ile)-dependent editing activities. One activity is designated as 'pretransfer' editing and involves the hydrolysis of activated Val-AMP. The other activity is designated 'posttransfer' editing and involves deacylation of mischarged Val-tRNA(Ile). The polypeptide is Isoleucine--tRNA ligase (Limosilactobacillus fermentum (strain NBRC 3956 / LMG 18251) (Lactobacillus fermentum)).